A 402-amino-acid chain; its full sequence is GPI mannosyltransferase 1 (402 aa).

The next 10 helical transmembrane spans lie at 5–25 (VILL…YGIF), 79–99 (WIHM…VMII), 108–128 (LTKQ…ITIS), 162–182 (LSIH…IYLL), 191–211 (IWRL…PTYF), 238–258 (FSIW…SQSI), 260–280 (LSKL…YLLW), 309–329 (QYFI…TITW), 333–353 (VVCI…AYLL), and 365–385 (LFFG…VFIT).

This sequence belongs to the PIGM family.

The protein resides in the endoplasmic reticulum membrane. Its pathway is glycolipid biosynthesis; glycosylphosphatidylinositol-anchor biosynthesis. In terms of biological role, mannosyltransferase involved in glycosylphosphatidylinositol-anchor biosynthesis. Transfers the first alpha-1,4-mannose to GlcN-acyl-PI during GPI precursor assembly. Required for cell wall integrity. In Kluyveromyces lactis (strain ATCC 8585 / CBS 2359 / DSM 70799 / NBRC 1267 / NRRL Y-1140 / WM37) (Yeast), this protein is GPI mannosyltransferase 1 (GPI14).